The sequence spans 379 residues: ATP phosphoribosyltransferase regulatory subunit (379 aa).

It belongs to the class-II aminoacyl-tRNA synthetase family. HisZ subfamily. In terms of assembly, heteromultimer composed of HisG and HisZ subunits.

It localises to the cytoplasm. It participates in amino-acid biosynthesis; L-histidine biosynthesis; L-histidine from 5-phospho-alpha-D-ribose 1-diphosphate: step 1/9. Required for the first step of histidine biosynthesis. May allow the feedback regulation of ATP phosphoribosyltransferase activity by histidine. In Caldanaerobacter subterraneus subsp. tengcongensis (strain DSM 15242 / JCM 11007 / NBRC 100824 / MB4) (Thermoanaerobacter tengcongensis), this protein is ATP phosphoribosyltransferase regulatory subunit.